The following is a 114-amino-acid chain: Hemerythrin subunit 2 (114 aa).

Fe cation is bound by residues histidine 26, histidine 55, glutamate 59, histidine 74, histidine 78, histidine 102, and aspartate 107.

It belongs to the hemerythrin family.

Its function is as follows. Hemerythrin is a respiratory protein in blood cells of certain marine worms. The oxygen-binding site in each chain contains two iron atoms. In Golfingia vulgaris (Marine worm), this protein is Hemerythrin subunit 2.